The sequence spans 677 residues: Beta-galactosidase (677 aa).

A signal peptide spans 1 to 23 (MPGFLVRILPLLLALLLLGPTRG). Residues 24-28 (LRNAT) constitute a propeptide that is removed on maturation. N-linked (GlcNAc...) asparagine glycosylation is present at asparagine 26. Substrate contacts are provided by tyrosine 83, glutamate 129, and asparagine 187. Glutamate 188 serves as the catalytic Proton donor. Cysteine 195 and cysteine 230 are oxidised to a cystine. A glycan (N-linked (GlcNAc...) asparagine) is linked at asparagine 247. Glutamate 268 serves as the catalytic Nucleophile. Tyrosine 333 contacts substrate. Residues asparagine 464, asparagine 498, asparagine 545, and asparagine 555 are each glycosylated (N-linked (GlcNAc...) asparagine). An intrachain disulfide couples cysteine 626 to cysteine 634. The segment at 654-677 (SKPVEKKLMPSPPQKNKDSWLDHV) is disordered. Basic and acidic residues predominate over residues 668–677 (KNKDSWLDHV).

Belongs to the glycosyl hydrolase 35 family. In terms of assembly, homodimer. May form higher multimers.

It is found in the lysosome. The enzyme catalyses Hydrolysis of terminal non-reducing beta-D-galactose residues in beta-D-galactosides.. Its function is as follows. Cleaves beta-linked terminal galactosyl residues from gangliosides, glycoproteins, and glycosaminoglycans. The protein is Beta-galactosidase (GLB1) of Pongo abelii (Sumatran orangutan).